Reading from the N-terminus, the 418-residue chain is Probable basic-leucine zipper transcription factor E (418 aa).

The stretch at 8 to 47 forms a coiled coil; sequence IQQIQQLHMLLQQQQQQQQQQQQQQQQQQQQLQQQNFQLT. Composition is skewed to low complexity over residues 51–71 and 95–134; these read FQIP…NNNN and INTT…NNNT. 4 disordered regions span residues 51–75, 95–149, 165–196, and 211–252; these read FQIP…ETAF, INTT…KKQK, PTAA…TTNT, and KNQE…KNRR. Residues 169–179 are compositionally biased toward basic residues; sequence VKKKPPAKKSA. Positions 180-196 are enriched in low complexity; that stretch reads KNAASQPTSPTLSTTNT. The span at 220–239 shows a compositional bias: acidic residues; the sequence is DNSEESDSDEEDFENGDNEN. Positions 246 to 309 constitute a bZIP domain; that stretch reads GDRKNRRLLK…QLMKDKVRYL (64 aa). The interval 248–268 is basic motif; it reads RKNRRLLKNREAAQLFRQRQK. The interval 274–281 is leucine-zipper; that stretch reads LESKASSL. Residues 324–362 adopt a coiled-coil conformation; it reads SVVNQDNINNLNNNLNGLQNQQNNNNNNNNNNNNNNNNN. A disordered region spans residues 336–418; sequence NNLNGLQNQQ…DSLLFNLPPD (83 aa).

This sequence belongs to the bZIP family.

It is found in the nucleus. Probable transcriptional regulator. The sequence is that of Probable basic-leucine zipper transcription factor E (bzpE) from Dictyostelium discoideum (Social amoeba).